A 310-amino-acid polypeptide reads, in one-letter code: Lipoyl synthase (310 aa).

Residues Cys-45, Cys-50, Cys-56, Cys-71, Cys-75, Cys-78, and Ser-285 each coordinate [4Fe-4S] cluster. Residues 57–274 enclose the Radical SAM core domain; that stretch reads WTKKHATVMI…GSIARAKGFL (218 aa).

Belongs to the radical SAM superfamily. Lipoyl synthase family. It depends on [4Fe-4S] cluster as a cofactor.

The protein localises to the cytoplasm. It carries out the reaction [[Fe-S] cluster scaffold protein carrying a second [4Fe-4S](2+) cluster] + N(6)-octanoyl-L-lysyl-[protein] + 2 oxidized [2Fe-2S]-[ferredoxin] + 2 S-adenosyl-L-methionine + 4 H(+) = [[Fe-S] cluster scaffold protein] + N(6)-[(R)-dihydrolipoyl]-L-lysyl-[protein] + 4 Fe(3+) + 2 hydrogen sulfide + 2 5'-deoxyadenosine + 2 L-methionine + 2 reduced [2Fe-2S]-[ferredoxin]. It participates in protein modification; protein lipoylation via endogenous pathway; protein N(6)-(lipoyl)lysine from octanoyl-[acyl-carrier-protein]: step 2/2. Catalyzes the radical-mediated insertion of two sulfur atoms into the C-6 and C-8 positions of the octanoyl moiety bound to the lipoyl domains of lipoate-dependent enzymes, thereby converting the octanoylated domains into lipoylated derivatives. In Novosphingobium aromaticivorans (strain ATCC 700278 / DSM 12444 / CCUG 56034 / CIP 105152 / NBRC 16084 / F199), this protein is Lipoyl synthase.